The following is a 361-amino-acid chain: Alanine racemase (361 aa).

Residue Lys35 is the Proton acceptor; specific for D-alanine of the active site. Position 35 is an N6-(pyridoxal phosphate)lysine (Lys35). Arg132 provides a ligand contact to substrate. Tyr257 serves as the catalytic Proton acceptor; specific for L-alanine. Met305 contributes to the substrate binding site.

The protein belongs to the alanine racemase family. It depends on pyridoxal 5'-phosphate as a cofactor.

The enzyme catalyses L-alanine = D-alanine. It participates in amino-acid biosynthesis; D-alanine biosynthesis; D-alanine from L-alanine: step 1/1. Functionally, catalyzes the interconversion of L-alanine and D-alanine. May also act on other amino acids. The protein is Alanine racemase (alr) of Thioalkalivibrio sulfidiphilus (strain HL-EbGR7).